The primary structure comprises 247 residues: Large ribosomal subunit protein uL3 (247 aa).

2 disordered regions span residues 140 to 164 (SHRS…KMPG) and 212 to 247 (LPKE…KEGA). Position 151 is an N5-methylglutamine (Gln-151). Over residues 232–247 (DEDKAPADTPAEKEGA) the composition is skewed to basic and acidic residues.

Belongs to the universal ribosomal protein uL3 family. In terms of assembly, part of the 50S ribosomal subunit. Forms a cluster with proteins L14 and L19. Post-translationally, methylated by PrmB.

Functionally, one of the primary rRNA binding proteins, it binds directly near the 3'-end of the 23S rRNA, where it nucleates assembly of the 50S subunit. The polypeptide is Large ribosomal subunit protein uL3 (Nitrobacter winogradskyi (strain ATCC 25391 / DSM 10237 / CIP 104748 / NCIMB 11846 / Nb-255)).